Here is an 814-residue protein sequence, read N- to C-terminus: Lon protease (814 aa).

The disordered stretch occupies residues 1-20; that stretch reads MANEAHNIEHTDPEFRDDSA. Residues 25–219 form the Lon N-terminal domain; it reads LPLLPVRDTV…KINQHLAKEL (195 aa). Residue 372 to 379 coordinates ATP; sequence GPPGVGKT. Residues 610–792 enclose the Lon proteolytic domain; it reads TKRAGVVVGL…DEVLEIALPS (183 aa). Active-site residues include S697 and K740.

This sequence belongs to the peptidase S16 family. As to quaternary structure, homohexamer. Organized in a ring with a central cavity.

It localises to the cytoplasm. The catalysed reaction is Hydrolysis of proteins in presence of ATP.. In terms of biological role, ATP-dependent serine protease that mediates the selective degradation of mutant and abnormal proteins as well as certain short-lived regulatory proteins. Required for cellular homeostasis and for survival from DNA damage and developmental changes induced by stress. Degrades polypeptides processively to yield small peptide fragments that are 5 to 10 amino acids long. Binds to DNA in a double-stranded, site-specific manner. This is Lon protease from Koribacter versatilis (strain Ellin345).